The sequence spans 151 residues: Ribosome maturation factor RimP (151 aa).

This sequence belongs to the RimP family.

Its subcellular location is the cytoplasm. Required for maturation of 30S ribosomal subunits. This chain is Ribosome maturation factor RimP, found in Shewanella sediminis (strain HAW-EB3).